The following is a 210-amino-acid chain: Isochorismatase domain-containing protein 2 (210 aa).

A Phosphoserine modification is found at S7.

Belongs to the isochorismatase family. Interacts with CDKN2A.

It localises to the cytoplasm. The protein resides in the nucleus. The polypeptide is Isochorismatase domain-containing protein 2 (Isoc2) (Rattus norvegicus (Rat)).